A 562-amino-acid polypeptide reads, in one-letter code: MSEQKLAVNEYLKTDSDYLRGTIQEGLDTQVTGSFSDGDQQLIKFHGFYQQDDRDLRNERKEQKLEPLYSFMLRARVPGGICTPAQWLDVDKISSTLTTSNSIRLTTRQTFQYHGIPKRNLKTLIQGLDKAALDSIAACGDVNRNVMCNPNPVESKLHAQAYAVAKELSDHLLPHTRAYAEIWLDEEKLVGETVEPVYGNTYLPRKFKMAVSVPPDNDVDVYTNDLGFIAIAEDGQLVGFNLVAGGGMGSTHGEVETFPRLADDFGFIKTADVIKFAEAVMTVQRDWGNRVVRKRARLKYTIVDHGFDAFKAEVENRAGVKFAPKRDVVIGDRGDRYGWVEGIDSKWHLTLFIESGRIKDLPGQTLQTGLREIAKIHKGDFRMTSNQNMIIAGVAAEDKAEIEGLARKHGLMGQVLTGTRGHSIACVALPTCPLAMAEAERYFPEFIDHIDALQAKHGISDQSIVVRMTGCPNGCARPFAAEIGLVGKAPGRYNLYLGANFEGTRLNKMHKENIQEAEILAELDTLFGRYATERDAGETFGNFTVRIGVVKAVNDAAKDFHG.

[4Fe-4S] cluster is bound by residues Cys426, Cys432, Cys471, and Cys475. Cys475 serves as a coordination point for siroheme.

This sequence belongs to the nitrite and sulfite reductase 4Fe-4S domain family. Alpha(8)-beta(8). The alpha component is a flavoprotein, the beta component is a hemoprotein. It depends on siroheme as a cofactor. [4Fe-4S] cluster serves as cofactor.

The enzyme catalyses hydrogen sulfide + 3 NADP(+) + 3 H2O = sulfite + 3 NADPH + 4 H(+). It functions in the pathway sulfur metabolism; hydrogen sulfide biosynthesis; hydrogen sulfide from sulfite (NADPH route): step 1/1. In terms of biological role, component of the sulfite reductase complex that catalyzes the 6-electron reduction of sulfite to sulfide. This is one of several activities required for the biosynthesis of L-cysteine from sulfate. The protein is Sulfite reductase [NADPH] hemoprotein beta-component of Shewanella denitrificans (strain OS217 / ATCC BAA-1090 / DSM 15013).